Consider the following 699-residue polypeptide: SHC SH2 domain-binding protein 1 homolog A (699 aa).

PbH1 repeat units follow at residues 480–502 (SAEL…EIYP), 503–524 (GSKC…LIKD), and 532–554 (IPKI…VLVK). Residues 603 to 627 (AVEHTNNLEKDQGNLAIAKEEVECE) are a coiled coil.

The protein localises to the midbody. It localises to the cytoplasm. Its subcellular location is the cytoskeleton. The protein resides in the spindle. Functionally, may play a role in signaling pathways governing cellular proliferation. The chain is SHC SH2 domain-binding protein 1 homolog A (shcbp1-a) from Xenopus laevis (African clawed frog).